The primary structure comprises 361 residues: Beta-hexosaminidase (361 aa).

Substrate contacts are provided by residues aspartate 69, arginine 77, arginine 144, and 174–175 (KH). Histidine 187 acts as the Proton donor/acceptor in catalysis. The active-site Nucleophile is aspartate 258.

The protein belongs to the glycosyl hydrolase 3 family. NagZ subfamily.

Its subcellular location is the cytoplasm. It carries out the reaction Hydrolysis of terminal non-reducing N-acetyl-D-hexosamine residues in N-acetyl-beta-D-hexosaminides.. The protein operates within cell wall biogenesis; peptidoglycan recycling. In terms of biological role, plays a role in peptidoglycan recycling by cleaving the terminal beta-1,4-linked N-acetylglucosamine (GlcNAc) from peptide-linked peptidoglycan fragments, giving rise to free GlcNAc, anhydro-N-acetylmuramic acid and anhydro-N-acetylmuramic acid-linked peptides. The sequence is that of Beta-hexosaminidase from Neisseria meningitidis serogroup A / serotype 4A (strain DSM 15465 / Z2491).